The following is an 85-amino-acid chain: MAHKKAGGSTRNGRDSRGKRLGVKHFGGEIISAGTIIVRQRGNKFHPGKYVGCGRDHTLFALQSGKLLFEKKGKLQRRLVSIIVE.

Residues 1-21 form a disordered region; it reads MAHKKAGGSTRNGRDSRGKRL.

This sequence belongs to the bacterial ribosomal protein bL27 family.

This is Large ribosomal subunit protein bL27 from Blochmanniella floridana.